A 596-amino-acid chain; its full sequence is Fumarate reductase (cytochrome) (596 aa).

An N-terminal signal peptide occupies residues 1 to 25; that stretch reads MKKMNLAVCIATLMGTAGLMGTAVA. Residues His-33, Cys-39, Cys-42, His-43, Cys-61, Cys-64, His-65, His-83, His-86, Cys-93, Cys-96, His-97, Ala-99, His-100, Cys-107, Cys-110, and His-111 each contribute to the heme c site. The segment at 143–596 is flavoprotein-like; sequence ALASAPHDTV…EEAAKYSKKN (454 aa). Positions 162, 181, 189, 194, 195, 196, 303, and 369 each coordinate FAD. Gly-195 contributes to the fumarate binding site. Residue Gly-195 participates in succinate binding. Tyr-386 lines the heme c pocket. Residues His-390, Thr-402, and Glu-403 each contribute to the succinate site. The fumarate site is built by Thr-402 and Glu-403. The active-site Proton donor is the Arg-427. Residue His-529 coordinates fumarate. Residue His-529 coordinates succinate. 2 residues coordinate FAD: His-530 and Glu-559. Residues Arg-569 and Gly-572 each coordinate fumarate. Residues Arg-569 and Gly-572 each contribute to the succinate site. Residues Ala-574 and Ile-575 each coordinate FAD.

In the C-terminal section; belongs to the FAD-dependent oxidoreductase 2 family. FRD/SDH subfamily. In terms of assembly, monomer. It depends on FAD as a cofactor. Heme c is required as a cofactor.

It is found in the periplasm. The catalysed reaction is 2 Fe(III)-[cytochrome c] + succinate = fumarate + 2 Fe(II)-[cytochrome c] + 2 H(+). Mesaconic acid is a competitive inhibitor of fumarate reduction. Flavocytochrome that catalyzes the reduction of fumarate to succinate. Is essential for fumarate respiration during anaerobic growth, acting as the terminal reductase. Receives electrons from the membrane-bound tetraheme c-type cytochrome CymA. Is essentially unidirectional, catalyzing only fumarate reduction. Cannot reduce nitrite, dimethylsulphoxide, trimethylamine-N-oxide (TMAO) or sulfite. In vitro, can use the artificial electron donor methyl viologen. The chain is Fumarate reductase (cytochrome) from Shewanella frigidimarina (strain NCIMB 400).